The sequence spans 163 residues: Succinate dehydrogenase assembly factor 2-A, mitochondrial (163 aa).

A mitochondrion-targeting transit peptide spans 1-23 (MLRQLRLTMDISGWIFLPWRRSM).

It belongs to the SDHAF2 family. In terms of assembly, interacts with the flavoprotein subunit within the SDH catalytic dimer.

The protein resides in the mitochondrion matrix. In terms of biological role, plays an essential role in the assembly of succinate dehydrogenase (SDH), an enzyme complex (also referred to as respiratory complex II) that is a component of both the tricarboxylic acid (TCA) cycle and the mitochondrial electron transport chain, and which couples the oxidation of succinate to fumarate with the reduction of ubiquinone (coenzyme Q) to ubiquinol. Required for flavinylation (covalent attachment of FAD) of the flavoprotein subunit of the SDH catalytic dimer. The protein is Succinate dehydrogenase assembly factor 2-A, mitochondrial of Drosophila sechellia (Fruit fly).